Consider the following 193-residue polypeptide: Resuscitation-promoting factor Rpf1 (193 aa).

Residues Met1–Ala35 form the signal peptide.

The protein belongs to the transglycosylase family. Rpf subfamily.

The protein resides in the secreted. Its function is as follows. Factor that stimulates resuscitation of dormant cells. Has peptidoglycan (PG) hydrolytic activity. Active in the pM concentration range. Has little to no effect on actively-growing cells. PG fragments could either directly activate the resuscitation pathway of dormant bacteria or serve as a substrate for endogenous Rpf, resulting in low molecular weight products with resuscitation activity. The chain is Resuscitation-promoting factor Rpf1 (rpf1) from Corynebacterium glutamicum (strain ATCC 13032 / DSM 20300 / JCM 1318 / BCRC 11384 / CCUG 27702 / LMG 3730 / NBRC 12168 / NCIMB 10025 / NRRL B-2784 / 534).